Reading from the N-terminus, the 94-residue chain is Small ribosomal subunit protein uS19 (94 aa).

Positions 73 to 94 are disordered; the sequence is EFSPTRRFGGHADKKSKKGQVK.

Belongs to the universal ribosomal protein uS19 family.

Its function is as follows. Protein S19 forms a complex with S13 that binds strongly to the 16S ribosomal RNA. The chain is Small ribosomal subunit protein uS19 from Kosmotoga olearia (strain ATCC BAA-1733 / DSM 21960 / TBF 19.5.1).